The chain runs to 298 residues: Distal tail protein (298 aa).

This sequence belongs to the skunalikevirus distal tail protein family. Homohexamer. Interacts with the receptor binding protein.

Its subcellular location is the virion. In terms of biological role, forms the distal part of the tail. Self-associates as two rings organized back to back, with a central channel allowing DNA ejection. This Lactococcus phage SK1 (Lactococcus lactis bacteriophage SK1) protein is Distal tail protein.